We begin with the raw amino-acid sequence, 798 residues long: Disintegrin and metalloproteinase domain-containing protein B (798 aa).

The N-terminal stretch at 1–23 (MKAFSCLLAVIATAASLFQHVDA) is a signal peptide. The Extracellular segment spans residues 24 to 706 (SHARDKLNNI…VSDWVSRHKP (683 aa)). N-linked (GlcNAc...) asparagine glycosylation is found at N32, N226, N227, N313, and N407. One can recognise a Peptidase M12B domain in the interval 271-510 (KVALIGVVAD…RTILTNCLTT (240 aa)). 3 disulfide bridges follow: C395–C495, C448–C459, and C580–C600. H431 contacts Zn(2+). E432 is an active-site residue. Positions 435 and 441 each coordinate Zn(2+). In terms of domain architecture, Disintegrin spans 519–608 (GQQCGNGIVE…DCPHDIHSKD (90 aa)). Residues 707–727 (IVIGVAVGAGCLLLLAIASCI) form a helical membrane-spanning segment. The Cytoplasmic segment spans residues 728–798 (CGRSRRQRPR…PGHMPPTRYA (71 aa)). The segment at 734–798 (QRPRNRKMPP…PGHMPPTRYA (65 aa)) is disordered. Over residues 775–792 (NNIPPPINAPPPAYPGHM) the composition is skewed to pro residues.

It depends on Zn(2+) as a cofactor.

The protein resides in the membrane. Probable zinc protease. In Trichophyton verrucosum (strain HKI 0517), this protein is Disintegrin and metalloproteinase domain-containing protein B (ADM-B).